The sequence spans 891 residues: Alanine--tRNA ligase (891 aa).

Positions 574, 578, 676, and 680 each coordinate Zn(2+).

It belongs to the class-II aminoacyl-tRNA synthetase family. Zn(2+) is required as a cofactor.

Its subcellular location is the cytoplasm. The catalysed reaction is tRNA(Ala) + L-alanine + ATP = L-alanyl-tRNA(Ala) + AMP + diphosphate. Catalyzes the attachment of alanine to tRNA(Ala) in a two-step reaction: alanine is first activated by ATP to form Ala-AMP and then transferred to the acceptor end of tRNA(Ala). Also edits incorrectly charged Ser-tRNA(Ala) and Gly-tRNA(Ala) via its editing domain. The polypeptide is Alanine--tRNA ligase (Synechococcus sp. (strain WH7803)).